The primary structure comprises 475 residues: Sulfate adenylyltransferase subunit 1 (475 aa).

In terms of domain architecture, tr-type G spans 25 to 239; that stretch reads KSLLRFLTCG…EVLETVEIQR (215 aa). The segment at 34–41 is G1; that stretch reads GSVDDGKS. Residue 34–41 coordinates GTP; that stretch reads GSVDDGKS. Residues 92–96 are G2; it reads GITID. Positions 113-116 are G3; it reads DTPG. GTP is bound by residues 113–117 and 168–171; these read DTPGH and NKMD. Residues 168–171 are G4; the sequence is NKMD. A G5 region spans residues 206 to 208; it reads SAL.

This sequence belongs to the TRAFAC class translation factor GTPase superfamily. Classic translation factor GTPase family. CysN/NodQ subfamily. Heterodimer composed of CysD, the smaller subunit, and CysN.

The catalysed reaction is sulfate + ATP + H(+) = adenosine 5'-phosphosulfate + diphosphate. It functions in the pathway sulfur metabolism; hydrogen sulfide biosynthesis; sulfite from sulfate: step 1/3. Functionally, with CysD forms the ATP sulfurylase (ATPS) that catalyzes the adenylation of sulfate producing adenosine 5'-phosphosulfate (APS) and diphosphate, the first enzymatic step in sulfur assimilation pathway. APS synthesis involves the formation of a high-energy phosphoric-sulfuric acid anhydride bond driven by GTP hydrolysis by CysN coupled to ATP hydrolysis by CysD. This is Sulfate adenylyltransferase subunit 1 from Escherichia coli O157:H7.